The primary structure comprises 595 residues: TNF receptor-associated factor family protein DDB_G0272348 (595 aa).

The disordered stretch occupies residues 14 to 64 (SFTNNNSNNNNNNNNNSNSNNNNNNNNNNINNNNNHNNNNKNNSNNKNEIN). A compositionally biased stretch (low complexity) spans 17 to 64 (NNNSNNNNNNNNNSNSNNNNNNNNNNINNNNNHNNNNKNNSNNKNEIN). An RING-type; degenerate zinc finger spans residues 87-134 (CTICSDLLVNSFHADKFKAVQCKNGHYTTCLNCWEKHLEKKKNCIQCG). 2 TRAF-type zinc fingers span residues 189–253 (EHLK…INKE) and 254–311 (SHNA…SKLS). Residues 348–410 (LLNGQNKKIT…QQQQSQQQQQ (63 aa)) adopt a coiled-coil conformation. The segment covering 409–440 (QQSQQQQQSQQSQQNNNSNSHFINNNNNNINN) has biased composition (low complexity). Residues 409-450 (QQSQQQQQSQQSQQNNNSNSHFINNNNNNINNVQMSDSPNGG) are disordered. A compositionally biased stretch (polar residues) spans 441-450 (VQMSDSPNGG). The 129-residue stretch at 456-584 (VYKNKWVISN…NDSITIEIEI (129 aa)) folds into the MATH domain.

The protein belongs to the TNF receptor-associated factor family. A subfamily.

The protein resides in the cytoplasm. Its function is as follows. Probable adapter protein and signal transducer that links members of the tumor necrosis factor receptor family to different signaling pathways by association with the receptor cytoplasmic domain and kinases. This Dictyostelium discoideum (Social amoeba) protein is TNF receptor-associated factor family protein DDB_G0272348.